A 591-amino-acid chain; its full sequence is Metalloendopeptidase OPG085 (591 aa).

His-41 contributes to the Zn(2+) binding site. Glu-44 is an active-site residue. The Zn(2+) site is built by His-45 and Glu-112.

It belongs to the peptidase M44 family. Zn(2+) is required as a cofactor. In terms of processing, undergoes proteolytic processing during the course of infection. May be cleaved into 46 kDa and 22 kDa products (Potential).

It localises to the virion. Its function is as follows. Probably involved in maturation of some viral proteins by processing them preferentially at Ala-Gly-|-Ser/Thr/Lys motifs. Does not seem to be responsible for the cleavage of major core proteins. This chain is Metalloendopeptidase OPG085 (OPG085), found in Variola virus (isolate Human/India/Ind3/1967) (VARV).